A 576-amino-acid chain; its full sequence is Arginine--tRNA ligase (576 aa).

Positions 123-133 match the 'HIGH' region motif; that stretch reads PNIGKEMHVGH.

This sequence belongs to the class-I aminoacyl-tRNA synthetase family. In terms of assembly, monomer.

It is found in the cytoplasm. It carries out the reaction tRNA(Arg) + L-arginine + ATP = L-arginyl-tRNA(Arg) + AMP + diphosphate. The protein is Arginine--tRNA ligase of Wigglesworthia glossinidia brevipalpis.